A 474-amino-acid chain; its full sequence is Iroquois-class homeodomain protein irx-5 (474 aa).

The segment at residues 109-171 (DPAYRKNASR…NARRRLKKEN (63 aa)) is a DNA-binding region (homeobox; TALE-type). 3 disordered regions span residues 174–222 (TWTP…SPDG), 252–294 (ERNG…IQQL), and 453–474 (SQSQDDLNKGTPYEMKKGMSSI). Residues 182-199 (EDEDDDENIDLEKNEEDD) show a composition bias toward acidic residues. Over residues 263–273 (PPTPPLCPPDQ) the composition is skewed to pro residues.

The protein belongs to the TALE/IRO homeobox family. As to expression, early in gastrulation, expressed in cells beneath the blastopore lip. Subsequently expressed in the neural plate in overlapping patterns with other irx members, which all share an anterior border of expression. At the time of neural tube closure (stage 19) in regions of the midbrain, hindbrain, neural tube and optic vesicle, where expression continues during tailbud stages. In stage 34, expressed throughout the eye retina. Does not appear to be expressed in the developing heart or pronephros.

The protein resides in the nucleus. Functionally, acts partially redundantly with other irx members in neural patterning. Required for formation of the posterior forebrain, midbrain, hindbrain, and to a lesser extent, spinal cord. Patterns the neuroectoderm in both the anterior/posterior and dorsal/ventral axes. Does not appear to play a role in pronephros kidney development. Involved in craniofacial and gonadal development. Modulates the migration of progenitor cell populations in branchial arches and gonads by repressing CXCL12. The chain is Iroquois-class homeodomain protein irx-5 (irx5) from Xenopus laevis (African clawed frog).